Consider the following 455-residue polypeptide: Golgi pH regulator A (455 aa).

Transmembrane regions (helical) follow at residues 5–25 (IDSS…WLFF), 46–66 (VTFA…LGVL), 79–99 (LCVI…YFIV), 114–134 (CLLW…FPIL), and 150–170 (VGVI…VNCP). N-linked (GlcNAc...) asparagine glycosylation is found at Asn-180 and Asn-243. 4 consecutive transmembrane segments (helical) span residues 290-310 (GYFF…NIVF), 343-363 (ISFI…LITL), 378-398 (VIVL…VLLI), and 425-445 (WFDV…YLAH).

Belongs to the Golgi pH regulator (TC 1.A.38) family. Homotrimer. Interacts with RABL3; the interaction stabilizes GPR89A. Ubiquitous.

It is found in the golgi apparatus membrane. The enzyme catalyses iodide(out) = iodide(in). It carries out the reaction chloride(in) = chloride(out). The catalysed reaction is bromide(in) = bromide(out). It catalyses the reaction fluoride(in) = fluoride(out). Functionally, voltage-gated channel that enables the transfer of monoatomic anions such as iodide, chloride, bromide and fluoride which may function in counter-ion conductance and participates in Golgi acidification. Plays a role in lymphocyte development, probably by acting as a RABL3 effector in hematopoietic cells. The polypeptide is Golgi pH regulator A (Homo sapiens (Human)).